Consider the following 426-residue polypeptide: Glutamate-1-semialdehyde 2,1-aminomutase (426 aa).

At K265 the chain carries N6-(pyridoxal phosphate)lysine.

This sequence belongs to the class-III pyridoxal-phosphate-dependent aminotransferase family. HemL subfamily. In terms of assembly, homodimer. Requires pyridoxal 5'-phosphate as cofactor.

It is found in the cytoplasm. It carries out the reaction (S)-4-amino-5-oxopentanoate = 5-aminolevulinate. It functions in the pathway porphyrin-containing compound metabolism; protoporphyrin-IX biosynthesis; 5-aminolevulinate from L-glutamyl-tRNA(Glu): step 2/2. In Methylococcus capsulatus (strain ATCC 33009 / NCIMB 11132 / Bath), this protein is Glutamate-1-semialdehyde 2,1-aminomutase.